The sequence spans 402 residues: Tryptophan synthase beta chain (402 aa).

The residue at position 91 (Lys-91) is an N6-(pyridoxal phosphate)lysine.

It belongs to the TrpB family. As to quaternary structure, tetramer of two alpha and two beta chains. It depends on pyridoxal 5'-phosphate as a cofactor.

The catalysed reaction is (1S,2R)-1-C-(indol-3-yl)glycerol 3-phosphate + L-serine = D-glyceraldehyde 3-phosphate + L-tryptophan + H2O. Its pathway is amino-acid biosynthesis; L-tryptophan biosynthesis; L-tryptophan from chorismate: step 5/5. Functionally, the beta subunit is responsible for the synthesis of L-tryptophan from indole and L-serine. The polypeptide is Tryptophan synthase beta chain (Streptococcus thermophilus (strain ATCC BAA-250 / LMG 18311)).